The chain runs to 122 residues: Small ribosomal subunit protein uS13 (122 aa).

Residues 98–122 (VRGQRTKTNARTRKGKRKTVGAKAK) form a disordered region.

The protein belongs to the universal ribosomal protein uS13 family. In terms of assembly, part of the 30S ribosomal subunit. Forms a loose heterodimer with protein S19. Forms two bridges to the 50S subunit in the 70S ribosome.

Functionally, located at the top of the head of the 30S subunit, it contacts several helices of the 16S rRNA. In the 70S ribosome it contacts the 23S rRNA (bridge B1a) and protein L5 of the 50S subunit (bridge B1b), connecting the 2 subunits; these bridges are implicated in subunit movement. Contacts the tRNAs in the A and P-sites. In Nautilia profundicola (strain ATCC BAA-1463 / DSM 18972 / AmH), this protein is Small ribosomal subunit protein uS13.